Consider the following 332-residue polypeptide: NADH-quinone oxidoreductase subunit H (332 aa).

9 helical membrane passes run 4 to 24, 44 to 64, 78 to 98, 120 to 140, 165 to 185, 194 to 214, 255 to 275, 279 to 299, and 312 to 332; these read FAFF…IFAS, IGPD…MIKL, FIFA…LAAI, VALL…FLGG, VGAL…LVDI, FSWL…ALFI, IAGA…FWII, IMMI…RAAF, and YLIL…AVLL.

It belongs to the complex I subunit 1 family. As to quaternary structure, NDH-1 is composed of 14 different subunits. Subunits NuoA, H, J, K, L, M, N constitute the membrane sector of the complex.

It localises to the cell inner membrane. The catalysed reaction is a quinone + NADH + 5 H(+)(in) = a quinol + NAD(+) + 4 H(+)(out). NDH-1 shuttles electrons from NADH, via FMN and iron-sulfur (Fe-S) centers, to quinones in the respiratory chain. The immediate electron acceptor for the enzyme in this species is believed to be ubiquinone. Couples the redox reaction to proton translocation (for every two electrons transferred, four hydrogen ions are translocated across the cytoplasmic membrane), and thus conserves the redox energy in a proton gradient. This subunit may bind ubiquinone. The polypeptide is NADH-quinone oxidoreductase subunit H (Campylobacter jejuni (strain RM1221)).